The sequence spans 79 residues: MKTLLLTLVMVTIMCLDLGYTLTCYKSLSGTVVCKPHETICYRRLIPATHGNAIIDRGCSTSCPGGNRPVCCSTDLCNK.

The signal sequence occupies residues 1 to 21; sequence MKTLLLTLVMVTIMCLDLGYT. 4 disulfide bridges follow: Cys-24–Cys-41, Cys-34–Cys-59, Cys-63–Cys-71, and Cys-72–Cys-77.

This sequence belongs to the three-finger toxin family. Short-chain subfamily. Type III alpha-neurotoxin sub-subfamily. Expressed by the venom gland.

It localises to the secreted. In terms of biological role, binds with high affinity to muscle nicotinic acetylcholine receptor (nAChR) and hinders acetylcholine binding to the receptor, thereby impairing neuromuscular transmission. Competes with the binding of alpha-bungarotoxin on muscle AChR (from Torpedo) with an IC(50) of 0.18 uM. Causes muscle paralysis, spasms and increased respiration. The protein is Short neurotoxin 6 of Pseudonaja textilis (Eastern brown snake).